The chain runs to 324 residues: MHGSLLKLALLSFSLGSSAAVLPRDTGRTSAPSGCSTVGTSGDYSTIGDALTALGSSTADACIYIAAGTYEEQLVINYAGHLTLYGETTDTQTYKQNTVTITHTISSPEAGSLDNSATVNIKSDLVSVYNINIANGYGSGAQAVALVANADQLGFYACQFTGYQDTLYAKAGHQYYINSRIEGAVDYIFGDASAWFENCDIVSNGAGYITAMSRETTSDTAWYAIDHCNIKAASGVDLTGDVYLGRPWRVLARVIYQYSVLPDIINAKGWHSMADGATPLYYEFNNTGAGSDTSDREYLSTIDAPVTKETVLGDDYKNWVDLSY.

Positions 1–19 are cleaved as a signal peptide; that stretch reads MHGSLLKLALLSFSLGSSA. Glutamine 142 contacts substrate. Residue aspartate 165 is the Proton donor of the active site. The Nucleophile role is filled by aspartate 186. The substrate site is built by arginine 246 and tryptophan 248. N-linked (GlcNAc...) asparagine glycosylation occurs at asparagine 285.

It belongs to the pectinesterase family.

It localises to the secreted. The catalysed reaction is [(1-&gt;4)-alpha-D-galacturonosyl methyl ester](n) + n H2O = [(1-&gt;4)-alpha-D-galacturonosyl](n) + n methanol + n H(+). Its pathway is glycan metabolism; pectin degradation; 2-dehydro-3-deoxy-D-gluconate from pectin: step 1/5. Involved in maceration and soft-rotting of plant tissue. This Aspergillus oryzae (strain ATCC 42149 / RIB 40) (Yellow koji mold) protein is Probable pectinesterase A (pmeA).